Here is a 100-residue protein sequence, read N- to C-terminus: Urease subunit gamma (100 aa).

This sequence belongs to the urease gamma subunit family. In terms of assembly, heterotrimer of UreA (gamma), UreB (beta) and UreC (alpha) subunits. Three heterotrimers associate to form the active enzyme.

Its subcellular location is the cytoplasm. The catalysed reaction is urea + 2 H2O + H(+) = hydrogencarbonate + 2 NH4(+). It participates in nitrogen metabolism; urea degradation; CO(2) and NH(3) from urea (urease route): step 1/1. The polypeptide is Urease subunit gamma (Nostoc sp. (strain PCC 7120 / SAG 25.82 / UTEX 2576)).